The primary structure comprises 286 residues: Bifunctional protein FolD (286 aa).

NADP(+)-binding positions include 165-167 (GRS), Ser190, and Val231.

Belongs to the tetrahydrofolate dehydrogenase/cyclohydrolase family. In terms of assembly, homodimer.

It carries out the reaction (6R)-5,10-methylene-5,6,7,8-tetrahydrofolate + NADP(+) = (6R)-5,10-methenyltetrahydrofolate + NADPH. It catalyses the reaction (6R)-5,10-methenyltetrahydrofolate + H2O = (6R)-10-formyltetrahydrofolate + H(+). It functions in the pathway one-carbon metabolism; tetrahydrofolate interconversion. Catalyzes the oxidation of 5,10-methylenetetrahydrofolate to 5,10-methenyltetrahydrofolate and then the hydrolysis of 5,10-methenyltetrahydrofolate to 10-formyltetrahydrofolate. The sequence is that of Bifunctional protein FolD from Bacillus cereus (strain ATCC 14579 / DSM 31 / CCUG 7414 / JCM 2152 / NBRC 15305 / NCIMB 9373 / NCTC 2599 / NRRL B-3711).